The chain runs to 254 residues: MTPTIRPLIAGNWKMHGTESSLGELKAIGSGFVEAAGAGADGVICVPATLLARASDILAKTPVATGGQDCHPATSGAHTGDIAAEMLADCGASYVIVGHSERRTDHHEADEDVAAKAEAAWRAGLTAIICIGETKIQREAGETLSVLSRQIAGSVPPGATAKNSVIAYEPVWAIGTGLTPTVEDVAQAHAHLRAELGMKLGIEADGMRLLYGGSVKPSNAGELLSILNVDGALIGGASLKAADFLAISAAVKGK.

12–14 (NWK) contributes to the substrate binding site. His-99 functions as the Electrophile in the catalytic mechanism. Residue Glu-169 is the Proton acceptor of the active site. Substrate-binding positions include Gly-175, Ser-214, and 235 to 236 (GG).

Belongs to the triosephosphate isomerase family. As to quaternary structure, homodimer.

The protein localises to the cytoplasm. It catalyses the reaction D-glyceraldehyde 3-phosphate = dihydroxyacetone phosphate. It functions in the pathway carbohydrate biosynthesis; gluconeogenesis. It participates in carbohydrate degradation; glycolysis; D-glyceraldehyde 3-phosphate from glycerone phosphate: step 1/1. Involved in the gluconeogenesis. Catalyzes stereospecifically the conversion of dihydroxyacetone phosphate (DHAP) to D-glyceraldehyde-3-phosphate (G3P). The protein is Triosephosphate isomerase of Chelativorans sp. (strain BNC1).